The sequence spans 126 residues: Fluoride-specific ion channel FluC (126 aa).

A run of 4 helical transmembrane segments spans residues 7-27 (LWLA…VLLL), 36-56 (FPAA…LTLA), 74-94 (GVLG…GLLL), and 98-118 (GGLA…AAVA). Gly77 and Thr80 together coordinate Na(+).

This sequence belongs to the fluoride channel Fluc/FEX (TC 1.A.43) family.

It localises to the cell membrane. The catalysed reaction is fluoride(in) = fluoride(out). Its activity is regulated as follows. Na(+) is not transported, but it plays an essential structural role and its presence is essential for fluoride channel function. Fluoride-specific ion channel. Important for reducing fluoride concentration in the cell, thus reducing its toxicity. This chain is Fluoride-specific ion channel FluC, found in Deinococcus radiodurans (strain ATCC 13939 / DSM 20539 / JCM 16871 / CCUG 27074 / LMG 4051 / NBRC 15346 / NCIMB 9279 / VKM B-1422 / R1).